The chain runs to 338 residues: tRNA N6-adenosine threonylcarbamoyltransferase (338 aa).

Fe cation-binding residues include H111 and H115. Substrate is bound by residues 134–138, D167, G180, and N275; that span reads LLSGG. D304 contacts Fe cation.

The protein belongs to the KAE1 / TsaD family. The cofactor is Fe(2+).

It is found in the cytoplasm. The catalysed reaction is L-threonylcarbamoyladenylate + adenosine(37) in tRNA = N(6)-L-threonylcarbamoyladenosine(37) in tRNA + AMP + H(+). Required for the formation of a threonylcarbamoyl group on adenosine at position 37 (t(6)A37) in tRNAs that read codons beginning with adenine. Is involved in the transfer of the threonylcarbamoyl moiety of threonylcarbamoyl-AMP (TC-AMP) to the N6 group of A37, together with TsaE and TsaB. TsaD likely plays a direct catalytic role in this reaction. The sequence is that of tRNA N6-adenosine threonylcarbamoyltransferase from Leptospira borgpetersenii serovar Hardjo-bovis (strain JB197).